Reading from the N-terminus, the 1503-residue chain is Rho GTPase-activating protein 5 (1503 aa).

FF domains lie at 267 to 325, 366 to 420, 427 to 481, and 482 to 548; these read QLVV…HIEQ, KLME…HVQH, RIEM…HQRE, and IVEK…HIGF. At Tyr-550 the chain carries 3'-nitrotyrosine. Ser-590 and Ser-765 each carry phosphoserine. The pG1 pseudoGTPase domain occupies 590–763; that stretch reads STNIDKVNLF…LESVKHNLDV (174 aa). The 166-residue stretch at 779 to 944 folds into the pG2 pseudoGTPase domain; that stretch reads RIVMCAMCGD…FSDVLEKKNM (166 aa). Ser-951 and Ser-968 each carry phosphoserine. Disordered stretches follow at residues 975 to 1004, 1022 to 1050, and 1069 to 1091; these read YNNYPDSDDDTEAPPPYSPIGDDVQLLPTP, HSTPNCHDHERNHKVPPPIKPKPVVPKTN, and NPRKQTSRVPLAHPEDMDSSDNY. The segment covering 1036 to 1045 has biased composition (pro residues); the sequence is VPPPIKPKPV. Position 1115 is a phosphoserine (Ser-1115). Disordered regions lie at residues 1129 to 1157 and 1169 to 1255; these read NTQGDEENGFSDRTSKGHGERRPSKYKYK and YRRT…TRRN. Residues 1141–1151 show a composition bias toward basic and acidic residues; sequence RTSKGHGERRP. 3 positions are modified to phosphoserine: Ser-1196, Ser-1203, and Ser-1219. The Rho-GAP domain occupies 1263 to 1450; that stretch reads MPLQDLVTAE…TFIQQCQFFF (188 aa).

May interact with RASA1/p120GAP. In terms of tissue distribution, expressed in spinal cord, cerebellum, kidney, testis and lung.

Its subcellular location is the cytoplasm. The protein resides in the cell membrane. GTPase-activating protein for Rho family members. The chain is Rho GTPase-activating protein 5 (Arhgap5) from Mus musculus (Mouse).